Here is a 251-residue protein sequence, read N- to C-terminus: Imidazole glycerol phosphate synthase subunit HisF (251 aa).

Active-site residues include Asp11 and Asp130.

It belongs to the HisA/HisF family. Heterodimer of HisH and HisF.

The protein localises to the cytoplasm. It catalyses the reaction 5-[(5-phospho-1-deoxy-D-ribulos-1-ylimino)methylamino]-1-(5-phospho-beta-D-ribosyl)imidazole-4-carboxamide + L-glutamine = D-erythro-1-(imidazol-4-yl)glycerol 3-phosphate + 5-amino-1-(5-phospho-beta-D-ribosyl)imidazole-4-carboxamide + L-glutamate + H(+). Its pathway is amino-acid biosynthesis; L-histidine biosynthesis; L-histidine from 5-phospho-alpha-D-ribose 1-diphosphate: step 5/9. Functionally, IGPS catalyzes the conversion of PRFAR and glutamine to IGP, AICAR and glutamate. The HisF subunit catalyzes the cyclization activity that produces IGP and AICAR from PRFAR using the ammonia provided by the HisH subunit. The polypeptide is Imidazole glycerol phosphate synthase subunit HisF (Bacteroides thetaiotaomicron (strain ATCC 29148 / DSM 2079 / JCM 5827 / CCUG 10774 / NCTC 10582 / VPI-5482 / E50)).